The chain runs to 206 residues: Pyrrolidone-carboxylate peptidase 2 (206 aa).

Catalysis depends on residues glutamate 78, cysteine 141, and histidine 165.

It belongs to the peptidase C15 family. In terms of assembly, homotetramer.

The protein resides in the cytoplasm. It catalyses the reaction Release of an N-terminal pyroglutamyl group from a polypeptide, the second amino acid generally not being Pro.. Removes 5-oxoproline from various penultimate amino acid residues except L-proline. In Caldanaerobacter subterraneus subsp. tengcongensis (strain DSM 15242 / JCM 11007 / NBRC 100824 / MB4) (Thermoanaerobacter tengcongensis), this protein is Pyrrolidone-carboxylate peptidase 2.